A 391-amino-acid polypeptide reads, in one-letter code: Putative 12-oxophytodienoate reductase 6 (391 aa).

FMN contacts are provided by residues P42–T44, A75, and Q117. Substrate is bound at residue H189 to N192. Y194 acts as the Proton donor in catalysis. R241 contacts FMN. Residue R282 coordinates substrate. Residues G312 and G333 to R334 contribute to the FMN site. Residues Y372–A391 are disordered. Residues D382–A391 show a composition bias toward acidic residues.

This sequence belongs to the NADH:flavin oxidoreductase/NADH oxidase family. It depends on FMN as a cofactor.

In terms of biological role, putative oxophytodienoate reductase that may be involved in the biosynthesis or metabolism of oxylipin signaling molecules. The chain is Putative 12-oxophytodienoate reductase 6 (OPR6) from Oryza sativa subsp. japonica (Rice).